The chain runs to 277 residues: Formamidopyrimidine-DNA glycosylase (277 aa).

Catalysis depends on proline 2, which acts as the Schiff-base intermediate with DNA. Glutamate 3 acts as the Proton donor in catalysis. Lysine 58 serves as the catalytic Proton donor; for beta-elimination activity. Residues histidine 95, arginine 113, and arginine 158 each contribute to the DNA site. An FPG-type zinc finger spans residues 243 to 277 (GVYDRANQPCLRCGGVVRQIRQAGRSTYYCTGCQH). The Proton donor; for delta-elimination activity role is filled by arginine 267.

This sequence belongs to the FPG family. Monomer. Requires Zn(2+) as cofactor.

The enzyme catalyses Hydrolysis of DNA containing ring-opened 7-methylguanine residues, releasing 2,6-diamino-4-hydroxy-5-(N-methyl)formamidopyrimidine.. The catalysed reaction is 2'-deoxyribonucleotide-(2'-deoxyribose 5'-phosphate)-2'-deoxyribonucleotide-DNA = a 3'-end 2'-deoxyribonucleotide-(2,3-dehydro-2,3-deoxyribose 5'-phosphate)-DNA + a 5'-end 5'-phospho-2'-deoxyribonucleoside-DNA + H(+). Functionally, involved in base excision repair of DNA damaged by oxidation or by mutagenic agents. Acts as a DNA glycosylase that recognizes and removes damaged bases. Has a preference for oxidized purines, such as 7,8-dihydro-8-oxoguanine (8-oxoG). Has AP (apurinic/apyrimidinic) lyase activity and introduces nicks in the DNA strand. Cleaves the DNA backbone by beta-delta elimination to generate a single-strand break at the site of the removed base with both 3'- and 5'-phosphates. The polypeptide is Formamidopyrimidine-DNA glycosylase (Dechloromonas aromatica (strain RCB)).